We begin with the raw amino-acid sequence, 244 residues long: uncharacterized protein (244 aa).

In terms of domain architecture, HTH gntR-type spans 12–80 (VALWRQIADR…QGRGTMIERK (69 aa)). Positions 40-59 (ETALAAEFGVNRHTVRSALA) form a DNA-binding region, H-T-H motif.

This is an uncharacterized protein from Rhizobium meliloti (strain 1021) (Ensifer meliloti).